A 77-amino-acid chain; its full sequence is P fimbrial regulatory protein KS71A (77 aa).

The chain is P fimbrial regulatory protein KS71A (KS71A) from Escherichia coli.